The chain runs to 481 residues: Tryptophan 5-hydroxylase (481 aa).

Residues 56–131 (SVIFSLKNEI…NVISMSPPEN (76 aa)) enclose the ACT domain. Residues Y272, R294, and T302 each contribute to the L-tryptophan site. Fe cation is bound by residues H309, H314, and E354. L-tryptophan is bound by residues S373 and I403.

Belongs to the biopterin-dependent aromatic amino acid hydroxylase family. Homotetramer. The cofactor is Fe(2+).

The catalysed reaction is (6R)-L-erythro-5,6,7,8-tetrahydrobiopterin + L-tryptophan + O2 = 5-hydroxy-L-tryptophan + (4aS,6R)-4a-hydroxy-L-erythro-5,6,7,8-tetrahydrobiopterin. Its pathway is aromatic compound metabolism; serotonin biosynthesis; serotonin from L-tryptophan: step 1/2. Its function is as follows. Oxidizes L-tryptophan to 5-hydroxy-l-tryptophan in the rate-determining step of serotonin biosynthesis. This is Tryptophan 5-hydroxylase (tph1) from Xenopus laevis (African clawed frog).